The primary structure comprises 312 residues: Olfactory receptor 4F6 (312 aa).

At 1–25 (MDEANHSVVSEFVFLGLSDSRKIQL) the chain is on the extracellular side. A glycan (N-linked (GlcNAc...) asparagine) is linked at Asn-5. The helical transmembrane segment at 26-49 (LLFLFFSVFYVSSLMGNLLIVLTV) threads the bilayer. The Cytoplasmic segment spans residues 50–57 (TSDPRLQS). A helical membrane pass occupies residues 58-79 (PMYFLLANLSIINLVFCSSTAP). Over 80–100 (KMIYDLFRKHKTISFGGCVVQ) the chain is Extracellular. Residues Cys-97 and Cys-189 are joined by a disulfide bond. Residues 101-120 (IFFIHAVGGTEMVLLIAMAF) form a helical membrane-spanning segment. Topologically, residues 121–139 (DRYVAICKPLHYLTIMNPQ) are cytoplasmic. The helical transmembrane segment at 140–158 (RCILFLVISWIIGIIHSVI) threads the bilayer. Residues 159–195 (QLAFVVDLLFCGPNELDSFFCDLPRFIKLACIETYTL) lie on the Extracellular side of the membrane. A helical transmembrane segment spans residues 196–219 (GFMVTANSGFISLASFLILIISYI). The Cytoplasmic segment spans residues 220–235 (FILVTVQKKSSGGIFK). Residues 236–258 (AFSMLSAHVIVVVLVFGPLIFFY) traverse the membrane as a helical segment. Over 259-269 (IFPFPTSHLDK) the chain is Extracellular. Residues 270–289 (FLAIFDAVITPVLNPVIYTF) form a helical membrane-spanning segment. Residues 290 to 312 (RNKEMMVAMRRRCSQFVNYSKIF) lie on the Cytoplasmic side of the membrane.

The protein belongs to the G-protein coupled receptor 1 family.

It localises to the cell membrane. Its function is as follows. Odorant receptor. This is Olfactory receptor 4F6 (OR4F6) from Homo sapiens (Human).